A 1196-amino-acid chain; its full sequence is Major DNA-binding protein (1196 aa).

Residues 499–512 (CNLCTFDTRHACVH) fold into a zinc finger. 2 consecutive short sequence motifs (required for filament formation) follow at residues 843–844 (FW) and 1142–1144 (FNF). The interval 1158 to 1196 (GGPGAPGPAFAGRKRAFHGDDPFGEGPPDKKGDLTLDML) is disordered. The segment at 1170–1196 (RKRAFHGDDPFGEGPPDKKGDLTLDML) is required for nuclear localization. The span at 1174 to 1196 (FHGDDPFGEGPPDKKGDLTLDML) shows a compositional bias: basic and acidic residues.

It belongs to the herpesviridae major DNA-binding protein family. In terms of assembly, homooligomers. Forms double-helical filaments necessary for the formation of replication compartments within the host nucleus. Interacts with the origin-binding protein. Interacts with the helicase primase complex; this interaction stimulates primer synthesis activity of the helicase-primase complex. Interacts with the DNA polymerase. Interacts with the alkaline exonuclease; this interaction increases its nuclease processivity.

It is found in the host nucleus. Functionally, plays several crucial roles in viral infection. Participates in the opening of the viral DNA origin to initiate replication by interacting with the origin-binding protein. May disrupt loops, hairpins and other secondary structures present on ssDNA to reduce and eliminate pausing of viral DNA polymerase at specific sites during elongation. Promotes viral DNA recombination by performing strand-transfer, characterized by the ability to transfer a DNA strand from a linear duplex to a complementary single-stranded DNA circle. Can also catalyze the renaturation of complementary single strands. Additionally, reorganizes the host cell nucleus, leading to the formation of prereplicative sites and replication compartments. This process is driven by the protein which can form double-helical filaments in the absence of DNA. This Homo sapiens (Human) protein is Major DNA-binding protein.